A 393-amino-acid chain; its full sequence is S-adenosylmethionine synthase (393 aa).

E9 is a binding site for Mg(2+). Residue H15 participates in ATP binding. K(+) is bound at residue E43. L-methionine-binding residues include E56 and Q99. ATP is bound by residues 167–169, 235–238, D246, 252–253, A269, K273, and K277; these read DGK, SGRF, and RK. D246 is a binding site for L-methionine. L-methionine is bound at residue K277.

The protein belongs to the AdoMet synthase family. In terms of assembly, homotetramer. The cofactor is Mn(2+). Mg(2+) serves as cofactor. It depends on Co(2+) as a cofactor. K(+) is required as a cofactor.

The protein resides in the cytoplasm. The enzyme catalyses L-methionine + ATP + H2O = S-adenosyl-L-methionine + phosphate + diphosphate. Its pathway is amino-acid biosynthesis; S-adenosyl-L-methionine biosynthesis; S-adenosyl-L-methionine from L-methionine: step 1/1. In terms of biological role, catalyzes the formation of S-adenosylmethionine from methionine and ATP. The reaction comprises two steps that are both catalyzed by the same enzyme: formation of S-adenosylmethionine (AdoMet) and triphosphate, and subsequent hydrolysis of the triphosphate. The protein is S-adenosylmethionine synthase (SAMS) of Gossypium hirsutum (Upland cotton).